The primary structure comprises 300 residues: Protoheme IX farnesyltransferase (300 aa).

Transmembrane regions (helical) follow at residues 24-44, 48-68, 94-114, 118-138, 146-166, 172-192, 217-237, 239-259, and 278-298; these read VTQL…PGMV, VLIG…AINC, PQIL…LYTF, LTMW…TLLL, IVIG…AVTG, AWIL…VLAL, LHIL…FISG, SGAV…AYAW, and IVYL…RPLL.

The protein belongs to the UbiA prenyltransferase family. Protoheme IX farnesyltransferase subfamily.

The protein resides in the cell inner membrane. It catalyses the reaction heme b + (2E,6E)-farnesyl diphosphate + H2O = Fe(II)-heme o + diphosphate. Its pathway is porphyrin-containing compound metabolism; heme O biosynthesis; heme O from protoheme: step 1/1. In terms of biological role, converts heme B (protoheme IX) to heme O by substitution of the vinyl group on carbon 2 of heme B porphyrin ring with a hydroxyethyl farnesyl side group. The protein is Protoheme IX farnesyltransferase of Burkholderia vietnamiensis (strain G4 / LMG 22486) (Burkholderia cepacia (strain R1808)).